The chain runs to 453 residues: Bifunctional protein GlmU (453 aa).

The segment at methionine 1–arginine 226 is pyrophosphorylase. UDP-N-acetyl-alpha-D-glucosamine contacts are provided by residues leucine 7 to glycine 10, lysine 21, glutamine 73, and glycine 78 to threonine 79. Aspartate 103 is a Mg(2+) binding site. The UDP-N-acetyl-alpha-D-glucosamine site is built by glycine 140, glutamate 155, asparagine 170, and asparagine 224. Asparagine 224 is a Mg(2+) binding site. The linker stretch occupies residues lysine 227–glutamine 247. The segment at glycine 248–lysine 453 is N-acetyltransferase. Residues arginine 329 and lysine 347 each coordinate UDP-N-acetyl-alpha-D-glucosamine. Histidine 359 acts as the Proton acceptor in catalysis. Positions 362 and 373 each coordinate UDP-N-acetyl-alpha-D-glucosamine. Residues alanine 376, asparagine 382–tyrosine 383, alanine 419, and arginine 436 each bind acetyl-CoA.

This sequence in the N-terminal section; belongs to the N-acetylglucosamine-1-phosphate uridyltransferase family. It in the C-terminal section; belongs to the transferase hexapeptide repeat family. In terms of assembly, homotrimer. Mg(2+) serves as cofactor.

It localises to the cytoplasm. It carries out the reaction alpha-D-glucosamine 1-phosphate + acetyl-CoA = N-acetyl-alpha-D-glucosamine 1-phosphate + CoA + H(+). The enzyme catalyses N-acetyl-alpha-D-glucosamine 1-phosphate + UTP + H(+) = UDP-N-acetyl-alpha-D-glucosamine + diphosphate. It functions in the pathway nucleotide-sugar biosynthesis; UDP-N-acetyl-alpha-D-glucosamine biosynthesis; N-acetyl-alpha-D-glucosamine 1-phosphate from alpha-D-glucosamine 6-phosphate (route II): step 2/2. The protein operates within nucleotide-sugar biosynthesis; UDP-N-acetyl-alpha-D-glucosamine biosynthesis; UDP-N-acetyl-alpha-D-glucosamine from N-acetyl-alpha-D-glucosamine 1-phosphate: step 1/1. It participates in bacterial outer membrane biogenesis; LPS lipid A biosynthesis. Catalyzes the last two sequential reactions in the de novo biosynthetic pathway for UDP-N-acetylglucosamine (UDP-GlcNAc). The C-terminal domain catalyzes the transfer of acetyl group from acetyl coenzyme A to glucosamine-1-phosphate (GlcN-1-P) to produce N-acetylglucosamine-1-phosphate (GlcNAc-1-P), which is converted into UDP-GlcNAc by the transfer of uridine 5-monophosphate (from uridine 5-triphosphate), a reaction catalyzed by the N-terminal domain. In Rippkaea orientalis (strain PCC 8801 / RF-1) (Cyanothece sp. (strain PCC 8801)), this protein is Bifunctional protein GlmU.